Here is a 294-residue protein sequence, read N- to C-terminus: NADH-cytochrome b5 reductase 1 (294 aa).

The chain crosses the membrane as a helical span at residues P13–F33. One can recognise an FAD-binding FR-type domain in the interval V44–T147. Residues S127–G142 and H153–L185 contribute to the FAD site.

This sequence belongs to the flavoprotein pyridine nucleotide cytochrome reductase family. In terms of assembly, monomer. Component of the 2-(3-amino-3-carboxypropyl)histidine synthase complex composed of DPH1, DPH2, DPH3 and a NADH-dependent reductase, predominantly CBR1. Requires FAD as cofactor.

Its subcellular location is the mitochondrion outer membrane. The enzyme catalyses 2 Fe(III)-[cytochrome b5] + NADH = 2 Fe(II)-[cytochrome b5] + NAD(+) + H(+). It catalyses the reaction 2 Fe(3+)-[Dph3] + NADH = 2 Fe(2+)-[Dph3] + NAD(+) + H(+). The protein operates within protein modification; peptidyl-diphthamide biosynthesis. Functionally, NADH-dependent reductase for DPH3 and cytochrome b5. Required for the first step of diphthamide biosynthesis, a post-translational modification of histidine which occurs in elongation factor 2. DPH1 and DPH2 transfer a 3-amino-3-carboxypropyl (ACP) group from S-adenosyl-L-methionine (SAM) to a histidine residue, the reaction is assisted by a reduction system comprising DPH3 and a NADH-dependent reductase, predominantly CBR1. By reducing DPH3, also involved in the formation of the tRNA wobble base modification mcm5s 2U (5-methoxycarbonylmethyl-2-thiouridine), mediated by the elongator complex. The cytochrome b5/NADH cytochrome b5 reductase electron transfer system supports the catalytic activity of several sterol biosynthetic enzymes. The sequence is that of NADH-cytochrome b5 reductase 1 (CBR1) from Cryptococcus neoformans var. neoformans serotype D (strain B-3501A) (Filobasidiella neoformans).